A 101-amino-acid chain; its full sequence is Small ribosomal subunit protein uS10 (101 aa).

Belongs to the universal ribosomal protein uS10 family. In terms of assembly, part of the 30S ribosomal subunit.

Functionally, involved in the binding of tRNA to the ribosomes. The chain is Small ribosomal subunit protein uS10 from Ureaplasma parvum serovar 3 (strain ATCC 27815 / 27 / NCTC 11736).